Reading from the N-terminus, the 427-residue chain is 3-phosphoshikimate 1-carboxyvinyltransferase (427 aa).

Lys-20, Ser-21, and Arg-25 together coordinate 3-phosphoshikimate. Lys-20 serves as a coordination point for phosphoenolpyruvate. Phosphoenolpyruvate contacts are provided by Gly-92 and Arg-120. Residues Ser-166, Gln-168, Asp-312, and Lys-339 each contribute to the 3-phosphoshikimate site. Gln-168 serves as a coordination point for phosphoenolpyruvate. Residue Asp-312 is the Proton acceptor of the active site. The phosphoenolpyruvate site is built by Arg-343 and Arg-385.

The protein belongs to the EPSP synthase family. In terms of assembly, monomer.

The protein resides in the cytoplasm. It catalyses the reaction 3-phosphoshikimate + phosphoenolpyruvate = 5-O-(1-carboxyvinyl)-3-phosphoshikimate + phosphate. Its pathway is metabolic intermediate biosynthesis; chorismate biosynthesis; chorismate from D-erythrose 4-phosphate and phosphoenolpyruvate: step 6/7. Its function is as follows. Catalyzes the transfer of the enolpyruvyl moiety of phosphoenolpyruvate (PEP) to the 5-hydroxyl of shikimate-3-phosphate (S3P) to produce enolpyruvyl shikimate-3-phosphate and inorganic phosphate. The protein is 3-phosphoshikimate 1-carboxyvinyltransferase of Streptococcus pyogenes serotype M4 (strain MGAS10750).